The primary structure comprises 583 residues: L-galactono-1,4-lactone dehydrogenase 2, mitochondrial (583 aa).

The transit peptide at 1-36 (MRRLLLAGILRRASSSPSSHHHLHLVRALSASSPLP) directs the protein to the mitochondrion. Residues 37–78 (ASDADLRKYAGYALLLLGCGAATYYSFPLPPDALHKKAVPFK) constitute a propeptide, removed in mature form. A helical membrane pass occupies residues 45–61 (YAGYALLLLGCGAATYY). Residues 95–266 (THEVHTRVLL…AEVTLQCVER (172 aa)) enclose the FAD-binding PCMH-type domain.

It depends on FAD as a cofactor.

The protein localises to the mitochondrion membrane. It carries out the reaction L-galactono-1,4-lactone + 4 Fe(III)-[cytochrome c] = L-dehydroascorbate + 4 Fe(II)-[cytochrome c] + 5 H(+). The protein operates within cofactor biosynthesis; L-ascorbate biosynthesis. Its function is as follows. Involved in the biosynthesis of ascorbic acid. This chain is L-galactono-1,4-lactone dehydrogenase 2, mitochondrial (GLDH2), found in Oryza sativa subsp. japonica (Rice).